Here is a 558-residue protein sequence, read N- to C-terminus: Methionine--tRNA ligase 1 (558 aa).

The short motif at 10-20 (PYINGIKHLGN) is the 'HIGH' region element. 4 residues coordinate Zn(2+): Cys142, Cys145, Cys155, and Cys158. The 'KMSKS' region motif lies at 332–336 (KFSTS). Thr335 contributes to the ATP binding site.

Belongs to the class-I aminoacyl-tRNA synthetase family. MetG type 1 subfamily. Monomer. Zn(2+) serves as cofactor.

Its subcellular location is the cytoplasm. It catalyses the reaction tRNA(Met) + L-methionine + ATP = L-methionyl-tRNA(Met) + AMP + diphosphate. Functionally, is required not only for elongation of protein synthesis but also for the initiation of all mRNA translation through initiator tRNA(fMet) aminoacylation. The polypeptide is Methionine--tRNA ligase 1 (Acaryochloris marina (strain MBIC 11017)).